The primary structure comprises 212 residues: Protein G1-like7 (212 aa).

A compositionally biased stretch (low complexity) spans methionine 1 to alanine 22. Disordered regions lie at residues methionine 1 to serine 34 and lysine 148 to serine 212. The 128-residue stretch at arginine 31 to lysine 158 folds into the ALOG domain. A Nuclear localization signal motif is present at residues lysine 156–lysine 160. Residues serine 173–alanine 182 are compositionally biased toward low complexity. The segment covering alanine 183–alanine 194 has biased composition (gly residues).

It belongs to the plant homeotic and developmental regulators ALOG protein family.

Its subcellular location is the nucleus. Probable transcription regulator that acts as a developmental regulator by promoting cell growth in response to light. This chain is Protein G1-like7, found in Oryza sativa subsp. indica (Rice).